An 89-amino-acid chain; its full sequence is Small ribosomal subunit protein uS15 (89 aa).

Belongs to the universal ribosomal protein uS15 family. In terms of assembly, part of the 30S ribosomal subunit. Forms a bridge to the 50S subunit in the 70S ribosome, contacting the 23S rRNA.

In terms of biological role, one of the primary rRNA binding proteins, it binds directly to 16S rRNA where it helps nucleate assembly of the platform of the 30S subunit by binding and bridging several RNA helices of the 16S rRNA. Its function is as follows. Forms an intersubunit bridge (bridge B4) with the 23S rRNA of the 50S subunit in the ribosome. The sequence is that of Small ribosomal subunit protein uS15 from Synechococcus elongatus (strain ATCC 33912 / PCC 7942 / FACHB-805) (Anacystis nidulans R2).